The chain runs to 300 residues: Succinate--CoA ligase [ADP-forming] subunit alpha (300 aa).

CoA-binding positions include 17–20, Lys-43, and 96–98; these read TGST and ITE. Tyr-159 provides a ligand contact to substrate. His-247 serves as the catalytic Tele-phosphohistidine intermediate.

It belongs to the succinate/malate CoA ligase alpha subunit family. Heterotetramer of two alpha and two beta subunits.

It catalyses the reaction succinate + ATP + CoA = succinyl-CoA + ADP + phosphate. The catalysed reaction is GTP + succinate + CoA = succinyl-CoA + GDP + phosphate. The protein operates within carbohydrate metabolism; tricarboxylic acid cycle; succinate from succinyl-CoA (ligase route): step 1/1. Functionally, succinyl-CoA synthetase functions in the citric acid cycle (TCA), coupling the hydrolysis of succinyl-CoA to the synthesis of either ATP or GTP and thus represents the only step of substrate-level phosphorylation in the TCA. The alpha subunit of the enzyme binds the substrates coenzyme A and phosphate, while succinate binding and nucleotide specificity is provided by the beta subunit. In Bacillus subtilis (strain 168), this protein is Succinate--CoA ligase [ADP-forming] subunit alpha.